A 738-amino-acid polypeptide reads, in one-letter code: LPS-assembly protein LptD (738 aa).

The signal sequence occupies residues 1-26 (MEHKRNNILLAGLFFLLLGLVSIARA).

The protein belongs to the LptD family. In terms of assembly, component of the lipopolysaccharide transport and assembly complex. Interacts with LptE and LptA.

The protein resides in the cell outer membrane. Together with LptE, is involved in the assembly of lipopolysaccharide (LPS) at the surface of the outer membrane. The chain is LPS-assembly protein LptD from Nitrosococcus oceani (strain ATCC 19707 / BCRC 17464 / JCM 30415 / NCIMB 11848 / C-107).